The primary structure comprises 294 residues: Nucleoside-specific channel-forming protein Tsx (294 aa).

An N-terminal signal peptide occupies residues 1–22 (MKKTLLAAGAVVALSTTFAAGA).

The protein belongs to the nucleoside-specific channel-forming outer membrane porin (Tsx) (TC 1.B.10) family.

Its subcellular location is the cell outer membrane. Functionally, functions as a substrate-specific channel for nucleosides and deoxynucleosides. Also functions in albicidin uptake and as receptor for colicin K. Also is a receptor for several Tsx-specific bacteriophages. The sequence is that of Nucleoside-specific channel-forming protein Tsx from Klebsiella pneumoniae.